The primary structure comprises 338 residues: Arginine N-succinyltransferase subunit alpha (338 aa).

Belongs to the succinylarginine dihydrolase family. Heterotetramer of two alpha and two beta subunits.

The enzyme catalyses succinyl-CoA + L-arginine = N(2)-succinyl-L-arginine + CoA + H(+). It functions in the pathway amino-acid degradation; L-arginine degradation via AST pathway; L-glutamate and succinate from L-arginine: step 1/5. Its function is as follows. Catalyzes the transfer of succinyl-CoA to arginine to produce N(2)-succinylarginine. Also acts on L-ornithine. The protein is Arginine N-succinyltransferase subunit alpha (astA) of Pseudomonas aeruginosa (strain ATCC 15692 / DSM 22644 / CIP 104116 / JCM 14847 / LMG 12228 / 1C / PRS 101 / PAO1).